The primary structure comprises 307 residues: MARTEGDSWDLANSVGATATMVAAARAAATRRSRPIIADPFAEPLVRAVGLDLFTRAASGEVDLDEVAAGLGFARMVDTFAARALFFDKFFADAIAAGLRQVVIVASGLDARPYRLPWPTGMRVYEIDQPEVIEFKTTTLARLGASPTADHHPVGIDLRDDWPSALRAAGFDAARPTAWLAEGVLIGFLPPEAETRLLDNVIELSAVGSRLAADYGTINGSSAESQQLAQQMTEGWRAHGLDMDIAGLTYPGEHTDVAAYLRSHGWETATADHGDVVLAAGLAELTAADRQSPASTIGFVTAVRSTD.

S-adenosyl-L-methionine is bound by residues Asp-128 and 157–158 (DL).

It belongs to the UPF0677 family.

Exhibits S-adenosyl-L-methionine-dependent methyltransferase activity. This is Putative S-adenosyl-L-methionine-dependent methyltransferase MMAR_4570 from Mycobacterium marinum (strain ATCC BAA-535 / M).